The following is a 171-amino-acid chain: MTIQAMYPGTFDPLTYGHLDIIIRAHKIFDKIFLAVAENSQKHPLFSLEERVIFAKQATAMLDYVTVFGFNDLTINVMKKKQVNILIRGLRNRSDFEYEIQLAKINNYFSNEVETVFMISTDIWACLSSKLVKEIAQYGGRIDHFIPNFIVEKVIEKLRNTEKKNKNISFL.

Thr10 lines the substrate pocket. Residues Thr10–Phe11 and His18 contribute to the ATP site. Residues Lys42, Thr74, and Arg88 each coordinate substrate. ATP contacts are provided by residues Gly89–Arg91, Glu99, and Trp124–Lys130.

The protein belongs to the bacterial CoaD family. As to quaternary structure, homohexamer. Mg(2+) is required as a cofactor.

Its subcellular location is the cytoplasm. It catalyses the reaction (R)-4'-phosphopantetheine + ATP + H(+) = 3'-dephospho-CoA + diphosphate. It functions in the pathway cofactor biosynthesis; coenzyme A biosynthesis; CoA from (R)-pantothenate: step 4/5. Functionally, reversibly transfers an adenylyl group from ATP to 4'-phosphopantetheine, yielding dephospho-CoA (dPCoA) and pyrophosphate. The protein is Phosphopantetheine adenylyltransferase of Blochmanniella pennsylvanica (strain BPEN).